Here is a 169-residue protein sequence, read N- to C-terminus: Peptide deformylase (169 aa).

Residues C91 and H133 each contribute to the Fe cation site. The active site involves E134. H137 is a Fe cation binding site.

This sequence belongs to the polypeptide deformylase family. The cofactor is Fe(2+).

It carries out the reaction N-terminal N-formyl-L-methionyl-[peptide] + H2O = N-terminal L-methionyl-[peptide] + formate. Its function is as follows. Removes the formyl group from the N-terminal Met of newly synthesized proteins. Requires at least a dipeptide for an efficient rate of reaction. N-terminal L-methionine is a prerequisite for activity but the enzyme has broad specificity at other positions. The protein is Peptide deformylase of Haemophilus influenzae (strain ATCC 51907 / DSM 11121 / KW20 / Rd).